The chain runs to 174 residues: Nucleoside-triphosphatase THEP1 (174 aa).

ATP-binding positions include 7–14 (GRPGVGKT) and 94–101 (LIIVDEIG).

It belongs to the THEP1 NTPase family.

It carries out the reaction a ribonucleoside 5'-triphosphate + H2O = a ribonucleoside 5'-diphosphate + phosphate + H(+). Has nucleotide phosphatase activity towards ATP, GTP, CTP, TTP and UTP. May hydrolyze nucleoside diphosphates with lower efficiency. The protein is Nucleoside-triphosphatase THEP1 of Thermotoga maritima (strain ATCC 43589 / DSM 3109 / JCM 10099 / NBRC 100826 / MSB8).